We begin with the raw amino-acid sequence, 1465 residues long: Myomesin-2 (1465 aa).

Residues 38–61 (ASTQASSQKSLSQRSSSQRASSQT) form a disordered region. A compositionally biased stretch (low complexity) spans 41–61 (QASSQKSLSQRSSSQRASSQT). 2 consecutive Ig-like C2-type domains span residues 154 to 245 (PEIL…AAVV) and 266 to 371 (PLSS…AFLF). Fibronectin type-III domains are found at residues 385 to 480 (APMD…ALDP), 513 to 608 (PPTG…AQDV), 614 to 707 (APGR…VQAA), 710 to 812 (VPSH…TMPE), and 815 to 912 (PAYD…ARPG). Ig-like C2-type domains are found at residues 904–1002 (PVLV…EELE), 1130–1211 (PHFA…QDVS), and 1345–1434 (RLIG…VTVS). The disordered stretch occupies residues 1442-1465 (IPDMAPPQQAKPKLIPASASAAGQ).

In terms of assembly, interacts with TTN/titin.

Its subcellular location is the cytoplasm. The protein resides in the myofibril. The protein localises to the sarcomere. It localises to the m line. Its function is as follows. Major component of the vertebrate myofibrillar M band. Binds myosin, titin, and light meromyosin. This binding is dose dependent. This is Myomesin-2 (MYOM2) from Homo sapiens (Human).